Here is a 428-residue protein sequence, read N- to C-terminus: E3 ubiquitin-protein ligase RNF128 (428 aa).

The signal sequence occupies residues 1–38 (MGPPLGAGVSCRGGCGSSRLLAWCFLLALSPQAPGSRG). Residues Asn-48, Asn-59, and Asn-101 are each glycosylated (N-linked (GlcNAc...) asparagine). Residues 75-183 (SPLEPVAGVL…LKGTKILQSI (109 aa)) enclose the PA domain. The chain crosses the membrane as a helical span at residues 208-228 (IFFVSVSFFIITAATVGYFIF). The segment at 277–318 (CAVCIELYKPNDLVRILTCNHIFHKTCVDPWLLEHRTCPMCK) adopts an RING-type; atypical zinc-finger fold. The interval 346-428 (ISNSASSHEE…QETAVREIKS (83 aa)) is disordered. The segment covering 416-428 (TPHQETAVREIKS) has biased composition (basic and acidic residues).

Auto-ubiquitinated. Controls the development of T-cell clonal anergy by ubiquitination.

The protein localises to the cytoplasm. Its subcellular location is the endomembrane system. It is found in the cytoskeleton. The protein resides in the perinuclear region. The enzyme catalyses S-ubiquitinyl-[E2 ubiquitin-conjugating enzyme]-L-cysteine + [acceptor protein]-L-lysine = [E2 ubiquitin-conjugating enzyme]-L-cysteine + N(6)-ubiquitinyl-[acceptor protein]-L-lysine.. It functions in the pathway protein modification; protein ubiquitination. Functionally, E3 ubiquitin-protein ligase that catalyzes 'Lys-27', 'Lys-48'- or 'Lys-63'-linked polyubiquitin chains formation and plays a role in different biological processes such as modulation of immune response, cytoskeletal dynamics or protein homeostasis. Inhibits IL2 and IL4 transcription, thereby playing an important role in the induction of the anergic phenotype, a long-term stable state of T-lymphocyte unresponsiveness to antigenic stimulation associated with the blockade of interleukin production. Ubiquitinates ARPC5 with 'Lys-48' linkages and COR1A with 'Lys-63' linkages leading to their degradation, down-regulation of these cytoskeletal components results in impaired lamellipodium formation and reduced accumulation of F-actin at the immunological synapse. Functions in the patterning of the dorsal ectoderm; sensitizes ectoderm to respond to neural-inducing signals. Plays a positive role in innate immune response by promoting 'Lys-63'-linked ubiquitination of TBK1 after RNA- or DNA-virus infection. Regulates alveolar macrophage activation and neutrophil infiltration by interacting with TLR4, targeting it for degradation, and inhibiting NF-kappa-B activation, hence decreasing pro-inflammatory cytokines. Negatively regulates the IL-3/STAT5 signaling pathway by facilitating 'Lys-27'-linked polyubiquitination of IL3RA leading to its degradation via lysosomal pathway. Directly regulates the N-glycosylation process in the endoplasmic reticulum by targeting the glycosyl-transferase RPN1 for ubiquitination and degradation. Other substrates targeted for degradation by RNF128 include transmembrane proteins CD40L, CD83 or the tetraspanin CD151. This chain is E3 ubiquitin-protein ligase RNF128 (RNF128), found in Pongo abelii (Sumatran orangutan).